The primary structure comprises 37 residues: Large ribosomal subunit protein bL36 (37 aa).

This sequence belongs to the bacterial ribosomal protein bL36 family.

The chain is Large ribosomal subunit protein bL36 from Mycobacterium ulcerans (strain Agy99).